We begin with the raw amino-acid sequence, 218 residues long: Non-structural protein NS3 (218 aa).

This sequence belongs to the orbivirus NS3 family.

In terms of biological role, may play a role in the release of virions from infected cells. The chain is Non-structural protein NS3 (Segment-10) from Camelus dromedarius (Dromedary).